Here is a 342-residue protein sequence, read N- to C-terminus: uncharacterized protein (342 aa).

Position 69 (arginine 69) interacts with substrate. Residue histidine 176 is the Proton donor of the active site. Residue aspartate 240 coordinates substrate.

Belongs to the aldose epimerase family.

This is an uncharacterized protein from Saccharomyces cerevisiae (strain ATCC 204508 / S288c) (Baker's yeast).